Here is a 428-residue protein sequence, read N- to C-terminus: MSMSMAPATVLQLLRGLSTPRLLTHIHQHRALGNHYHHYHQHYQHQHHLLHHQQQYLRLFTCTALPAAAPALFSILHTARGYSSTTKQEAGATGPNDAPEVAPNAPLLAKLFPQTSPEVDSNAEQERKKREEEEEKENERAWKRMKLGFAIFGGSAVAAGFWAVYEFGKPEVDPNGQPIEDEFTHKPLVQQYLQRMWKSIHYYQRMIQEPSRAKLLPDPLKPPYVQPRYTLVLEMKDVLVHPDWTYQTGWRFKKRPGVDHFLAECAKDFEIVVFTAEQGMTVFPILDALDPNGYIMYRLVRDATHFVDGHHVKNLDNLNRDLKKVIVVDWDANATKMHPDNTFGLARWHGNDDDGQLLDLIAFLKIIAQNNVDDVREVLHYYRQFDDPINQFRENQRKLAEQMLEAERIEQSKTKPMVKQWSRNILGR.

A helical transmembrane segment spans residues 59–79 (LFTCTALPAAAPALFSILHTA). At 80 to 428 (RGYSSTTKQE…KQWSRNILGR (349 aa)) the chain is on the mitochondrial intermembrane side. A disordered region spans residues 112–138 (FPQTSPEVDSNAEQERKKREEEEEKEN). The segment covering 124–138 (EQERKKREEEEEKEN) has biased composition (basic and acidic residues). The FCP1 homology domain occupies 224–367 (YVQPRYTLVL…LDLIAFLKII (144 aa)).

The protein belongs to the TIM50 family. In terms of assembly, component of the TIM23 complex at least composed of Tim23, Tim17 (Tim17a1, Tim17a2 or Tim17b1) and a Tim50.

The protein resides in the mitochondrion inner membrane. Essential component of the TIM23 complex, a complex that mediates the translocation of transit peptide-containing proteins across the mitochondrial inner membrane. This is Mitochondrial import inner membrane translocase subunit TIM50-C (ttm50) from Drosophila melanogaster (Fruit fly).